A 166-amino-acid polypeptide reads, in one-letter code: Thiol peroxidase (166 aa).

The 147-residue stretch at 18–164 folds into the Thioredoxin domain; the sequence is VKVGDKAPNF…YEKAIEAAKA (147 aa). Cys60 acts as the Cysteine sulfenic acid (-SOH) intermediate in catalysis. Cys60 and Cys94 form a disulfide bridge.

This sequence belongs to the peroxiredoxin family. Tpx subfamily. Homodimer.

The catalysed reaction is a hydroperoxide + [thioredoxin]-dithiol = an alcohol + [thioredoxin]-disulfide + H2O. Thiol-specific peroxidase that catalyzes the reduction of hydrogen peroxide and organic hydroperoxides to water and alcohols, respectively. Plays a role in cell protection against oxidative stress by detoxifying peroxides. This Halalkalibacterium halodurans (strain ATCC BAA-125 / DSM 18197 / FERM 7344 / JCM 9153 / C-125) (Bacillus halodurans) protein is Thiol peroxidase.